Reading from the N-terminus, the 96-residue chain is Prokineticin Bm8-b (96 aa).

Positions 1–19 (MKCFAQIVVLLLVIAFSHG) are cleaved as a signal peptide. 4 cysteine pairs are disulfide-bonded: cysteine 32/cysteine 50, cysteine 37/cysteine 78, cysteine 60/cysteine 86, and cysteine 80/cysteine 95.

The protein belongs to the AVIT (prokineticin) family. As to expression, expressed by the skin glands.

It is found in the secreted. In terms of biological role, potent agonist for both PKR1/PROKR1 and PKR2/PROKR2, and inducer of a potent and long-lasting hyperalgesia. Also potentiates capsaicin-induced TRPV1 current, when tested on DRG neurons. At subnanomolar concentrations, this protein both induces potent chemotaxis of macrophages and stimulates LPS-induced production of the pro-inflammatory cytokines IL-1 and IL-12. In vivo, potently stimulates the contraction of the guinea-pig gastrointestinal (GI) smooth muscle (nanomolar concentration). The polypeptide is Prokineticin Bm8-b (Bombina maxima (Giant fire-bellied toad)).